The sequence spans 432 residues: Lipid-A-disaccharide synthase (432 aa).

A compositionally biased stretch (polar residues) spans 1–11; it reads MTGIGNQTSGI. The disordered stretch occupies residues 1 to 35; that stretch reads MTGIGNQTSGIETGVHDRAPADGEPTALPISHSPL.

Belongs to the LpxB family.

The enzyme catalyses a lipid X + a UDP-2-N,3-O-bis[(3R)-3-hydroxyacyl]-alpha-D-glucosamine = a lipid A disaccharide + UDP + H(+). The protein operates within bacterial outer membrane biogenesis; LPS lipid A biosynthesis. Condensation of UDP-2,3-diacylglucosamine and 2,3-diacylglucosamine-1-phosphate to form lipid A disaccharide, a precursor of lipid A, a phosphorylated glycolipid that anchors the lipopolysaccharide to the outer membrane of the cell. This Xanthomonas oryzae pv. oryzae (strain MAFF 311018) protein is Lipid-A-disaccharide synthase.